The primary structure comprises 105 residues: Heat shock protein HspQ (105 aa).

Residues 84–105 (QPKLDELSASIKKQLKTPRLRN) form a disordered region. Residues 96–105 (KQLKTPRLRN) are compositionally biased toward basic residues.

The protein belongs to the HspQ family.

It is found in the cytoplasm. In terms of biological role, involved in the degradation of certain denaturated proteins, including DnaA, during heat shock stress. The protein is Heat shock protein HspQ of Wigglesworthia glossinidia brevipalpis.